Reading from the N-terminus, the 157-residue chain is uncharacterized protein (157 aa).

Residues 1-157 (MNRGPPLRSR…SFSFLVPSNS (157 aa)) are disordered. Positions 8 to 31 (RSRPPSSPPPASAFPGPSPFPSPS) are enriched in pro residues. Basic residues predominate over residues 62-71 (RTSHPPRCPH). Over residues 76–95 (PSAPSPPFTPPHPLPTPTPS) the composition is skewed to pro residues. Composition is skewed to low complexity over residues 96 to 117 (SSPRSPWLSLAPLPTSSASLAS) and 124 to 157 (SFSSPSSPSTSPLSPSSSSFPSSSSFSFLVPSNS).

This is an uncharacterized protein from Vitis vinifera (Grape).